Consider the following 77-residue polypeptide: Small ribosomal subunit protein uS4 (77 aa).

Positions Pro-45–Glu-77 are disordered. Positions Gly-52–Ala-63 are enriched in basic residues.

This sequence belongs to the universal ribosomal protein uS4 family.

The sequence is that of Small ribosomal subunit protein uS4 (RPS9) from Nicotiana tabacum (Common tobacco).